Reading from the N-terminus, the 438-residue chain is Adenylyltransferase and sulfurtransferase UBA4 (438 aa).

ATP is bound by residues Gly-81, Asp-102, 109 to 113 (SNLHR), Lys-126, and 170 to 171 (DH). Zn(2+) contacts are provided by Cys-212 and Cys-215. The active-site Glycyl thioester intermediate; for adenylyltransferase activity is Cys-229. Zn(2+) is bound by residues Cys-290 and Cys-293. The region spanning 340–436 (NKKKHILIDV…WSDDVDSKIP (97 aa)) is the Rhodanese domain. Cys-396 acts as the Cysteine persulfide intermediate; for sulfurtransferase activity in catalysis.

The protein in the N-terminal section; belongs to the HesA/MoeB/ThiF family. UBA4 subfamily. Requires Zn(2+) as cofactor.

The protein resides in the cytoplasm. Its subcellular location is the cytosol. It functions in the pathway tRNA modification; 5-methoxycarbonylmethyl-2-thiouridine-tRNA biosynthesis. In terms of biological role, plays a central role in 2-thiolation of mcm(5)S(2)U at tRNA wobble positions of cytosolic tRNA(Lys), tRNA(Glu) and tRNA(Gln). Acts by mediating the C-terminal thiocarboxylation of sulfur carrier URM1. Its N-terminus first activates URM1 as acyl-adenylate (-COAMP), then the persulfide sulfur on the catalytic cysteine is transferred to URM1 to form thiocarboxylation (-COSH) of its C-terminus. The reaction probably involves hydrogen sulfide that is generated from the persulfide intermediate and that acts as a nucleophile towards URM1. Subsequently, a transient disulfide bond is formed. Does not use thiosulfate as sulfur donor; NFS1 probably acting as a sulfur donor for thiocarboxylation reactions. Prior mcm(5) tRNA modification by the elongator complex is required for 2-thiolation. May also be involved in protein urmylation. The polypeptide is Adenylyltransferase and sulfurtransferase UBA4 (Candida albicans (strain SC5314 / ATCC MYA-2876) (Yeast)).